We begin with the raw amino-acid sequence, 969 residues long: Vacuolar membrane protease (969 aa).

Residues 1-12 lie on the Cytoplasmic side of the membrane; sequence MTRVNSIIGFRP. Residues 13 to 33 traverse the membrane as a helical segment; the sequence is IPVTLLTVITYVSLFSALLFI. Residues 34–381 lie on the Vacuolar side of the membrane; it reads DRQPPAVAKK…RAFSVLHLHT (348 aa). N-linked (GlcNAc...) asparagine glycosylation is present at Asn125. The Zn(2+) site is built by His166 and Asp178. Residue Glu216 is the Proton acceptor of the active site. Residues Glu217, Glu242, and His315 each contribute to the Zn(2+) site. Asn355 carries N-linked (GlcNAc...) asparagine glycosylation. The chain crosses the membrane as a helical span at residues 382–402; that stretch reads IFAFTITLIVVPFVVVLVAMW. Residues 403 to 438 lie on the Cytoplasmic side of the membrane; the sequence is ALGHFDKLYFFSNTAYIPPPPEHSIASRTTQGWRGV. A helical membrane pass occupies residues 439 to 459; the sequence is LRFPVAFVAASAGVVGMAFLI. The Vacuolar segment spans residues 460 to 469; that stretch reads NKINPMVVYA. Residues 470 to 490 traverse the membrane as a helical segment; the sequence is SQYTVWTCFLSTWWIIAWVIL. The Cytoplasmic segment spans residues 491–505; it reads RGADAVRPTALARGY. A helical transmembrane segment spans residues 506-526; it reads GFLEQWLLWLVAMIGVAISIG. Over 527–531 the chain is Vacuolar; the sequence is KSHLG. The helical transmembrane segment at 532–552 threads the bilayer; that stretch reads SGYWVLVFYSGFFTSAFISLL. Topologically, residues 553–662 are cytoplasmic; it reads EMAALQKKSE…WSKDLPSWTW (110 aa). The segment at 571-629 is disordered; sequence DQAYPPEEHSQTGASGNISNRAANDDDDAGEHATEETPLFRGPNRPLSFAPHRNPRYDN. Residues 581 to 592 are compositionally biased toward polar residues; it reads QTGASGNISNRA. A helical transmembrane segment spans residues 663–683; it reads ILQFLATVPLQLVLAGSVALL. The Vacuolar segment spans residues 684-698; sequence LGNALAQTGADGSDM. A helical membrane pass occupies residues 699–719; that stretch reads LTVLLGFGVFSIILLLPVAPF. Over 720-727 the chain is Cytoplasmic; the sequence is LHRITYHV. The chain crosses the membrane as a helical span at residues 728–748; that stretch reads TLFIFVIFVGTFIYNLAAPPF. Over 749–969 the chain is Vacuolar; it reads SPNARLKVYF…LVEGSVPFMI (221 aa). An N-linked (GlcNAc...) asparagine glycan is attached at Asn840.

It belongs to the peptidase M28 family. The cofactor is Zn(2+).

The protein resides in the vacuole membrane. Functionally, may be involved in vacuolar sorting and osmoregulation. The polypeptide is Vacuolar membrane protease (Tuber melanosporum (strain Mel28) (Perigord black truffle)).